The following is a 132-amino-acid chain: Ribosome-binding factor A (132 aa).

The protein belongs to the RbfA family. As to quaternary structure, monomer. Binds 30S ribosomal subunits, but not 50S ribosomal subunits or 70S ribosomes.

It is found in the cytoplasm. One of several proteins that assist in the late maturation steps of the functional core of the 30S ribosomal subunit. Associates with free 30S ribosomal subunits (but not with 30S subunits that are part of 70S ribosomes or polysomes). Required for efficient processing of 16S rRNA. May interact with the 5'-terminal helix region of 16S rRNA. The polypeptide is Ribosome-binding factor A (Xanthomonas campestris pv. campestris (strain 8004)).